A 60-amino-acid chain; its full sequence is Large ribosomal subunit protein bL32 (60 aa).

The span at 1–23 shows a compositional bias: basic residues; that stretch reads MAKHPVPKKKTSKSKRDMRRSHH. The tract at residues 1–26 is disordered; the sequence is MAKHPVPKKKTSKSKRDMRRSHHALV.

The protein belongs to the bacterial ribosomal protein bL32 family.

The protein is Large ribosomal subunit protein bL32 of Deinococcus geothermalis (strain DSM 11300 / CIP 105573 / AG-3a).